Reading from the N-terminus, the 347-residue chain is NADH-ubiquinone oxidoreductase chain 2 (347 aa).

9 helical membrane-spanning segments follow: residues 1–21, 59–79, 93–115, 149–169, 178–198, 201–221, 239–259, 274–294, and 325–345; these read MNPF…MIVM, YFMT…INLL, TASM…HFWV, INPN…GWGG, IMAY…IYNP, TILN…MFAL, IITT…PLTG, DSII…YFYM, and LLPT…MLVV.

It belongs to the complex I subunit 2 family. Core subunit of respiratory chain NADH dehydrogenase (Complex I) which is composed of 45 different subunits. Interacts with TMEM242.

The protein resides in the mitochondrion inner membrane. It carries out the reaction a ubiquinone + NADH + 5 H(+)(in) = a ubiquinol + NAD(+) + 4 H(+)(out). Its function is as follows. Core subunit of the mitochondrial membrane respiratory chain NADH dehydrogenase (Complex I) which catalyzes electron transfer from NADH through the respiratory chain, using ubiquinone as an electron acceptor. Essential for the catalytic activity and assembly of complex I. This chain is NADH-ubiquinone oxidoreductase chain 2, found in Hippopotamus amphibius (Hippopotamus).